The chain runs to 338 residues: Phenylalanine--tRNA ligase alpha subunit (338 aa).

E252 is a Mg(2+) binding site.

The protein belongs to the class-II aminoacyl-tRNA synthetase family. Phe-tRNA synthetase alpha subunit type 1 subfamily. In terms of assembly, tetramer of two alpha and two beta subunits. It depends on Mg(2+) as a cofactor.

It localises to the cytoplasm. The catalysed reaction is tRNA(Phe) + L-phenylalanine + ATP = L-phenylalanyl-tRNA(Phe) + AMP + diphosphate + H(+). This chain is Phenylalanine--tRNA ligase alpha subunit, found in Pseudomonas syringae pv. tomato (strain ATCC BAA-871 / DC3000).